Here is a 300-residue protein sequence, read N- to C-terminus: Ribosome-inactivating protein 3 (300 aa).

The active site involves glutamate 207.

It belongs to the ribosome-inactivating protein family. Type 1 RIP subfamily. As to quaternary structure, monomer. As to expression, accumulates to high levels in seeds.

The protein localises to the cytoplasm. It carries out the reaction Endohydrolysis of the N-glycosidic bond at one specific adenosine on the 28S rRNA.. Its function is as follows. Possesses features of some constitutive defense agent. The coordinate Opaque-2-controlled synthesis of this protein and the major seed storage proteins (zeins) may provide the germinating seedling with both nutritional benefits and protection against pathogen invasion of the surrounding endosperm. The chain is Ribosome-inactivating protein 3 (CRIP3) from Zea mays (Maize).